The chain runs to 208 residues: Small ribosomal subunit protein uS4 (208 aa).

The segment at 24-52 (GVKPFDVKTKKANKAPGQHGQARGGKQSE) is disordered. Positions 98–160 (SRLDNVVYRM…AKQQLRIKNA (63 aa)) constitute an S4 RNA-binding domain.

It belongs to the universal ribosomal protein uS4 family. Part of the 30S ribosomal subunit. Contacts protein S5. The interaction surface between S4 and S5 is involved in control of translational fidelity.

Functionally, one of the primary rRNA binding proteins, it binds directly to 16S rRNA where it nucleates assembly of the body of the 30S subunit. Its function is as follows. With S5 and S12 plays an important role in translational accuracy. This is Small ribosomal subunit protein uS4 from Acinetobacter baumannii (strain ATCC 17978 / DSM 105126 / CIP 53.77 / LMG 1025 / NCDC KC755 / 5377).